Consider the following 315-residue polypeptide: Lipase 3 (315 aa).

The signal sequence occupies residues 1 to 18 (MLLKRLGLAALFSLSMVG). Cys-19 carries N-palmitoyl cysteine lipidation. Cys-19 carries S-diacylglycerol cysteine lipidation. In terms of domain architecture, AB hydrolase-1 spans 69-296 (PLLLIHGFGG…MNDVGHVPMV (228 aa)). Residue His-74 is part of the active site. Ser-142 functions as the Charge relay system in the catalytic mechanism.

Belongs to the lipase/esterase LIP3/BchO family.

The protein resides in the cell membrane. It catalyses the reaction a triacylglycerol + H2O = a diacylglycerol + a fatty acid + H(+). The sequence is that of Lipase 3 (lip3) from Moraxella sp. (strain TA144).